We begin with the raw amino-acid sequence, 304 residues long: Acetyl-coenzyme A carboxylase carboxyl transferase subunit beta (304 aa).

Residues 23–292 (VWTKCDSCGQ…PNPDAPREGV (270 aa)) form the CoA carboxyltransferase N-terminal domain. 4 residues coordinate Zn(2+): cysteine 27, cysteine 30, cysteine 46, and cysteine 49. Residues 27-49 (CDSCGQVLYRAELERNLEVCPKC) form a C4-type zinc finger. Residues 284 to 304 (NPDAPREGVVVPPAPGQESEA) are disordered.

It belongs to the AccD/PCCB family. In terms of assembly, acetyl-CoA carboxylase is a heterohexamer composed of biotin carboxyl carrier protein (AccB), biotin carboxylase (AccC) and two subunits each of ACCase subunit alpha (AccA) and ACCase subunit beta (AccD). Requires Zn(2+) as cofactor.

The protein resides in the cytoplasm. It carries out the reaction N(6)-carboxybiotinyl-L-lysyl-[protein] + acetyl-CoA = N(6)-biotinyl-L-lysyl-[protein] + malonyl-CoA. Its pathway is lipid metabolism; malonyl-CoA biosynthesis; malonyl-CoA from acetyl-CoA: step 1/1. Component of the acetyl coenzyme A carboxylase (ACC) complex. Biotin carboxylase (BC) catalyzes the carboxylation of biotin on its carrier protein (BCCP) and then the CO(2) group is transferred by the transcarboxylase to acetyl-CoA to form malonyl-CoA. The chain is Acetyl-coenzyme A carboxylase carboxyl transferase subunit beta from Salmonella arizonae (strain ATCC BAA-731 / CDC346-86 / RSK2980).